The following is a 104-amino-acid chain: L-rhamnose mutarotase (104 aa).

A substrate-binding site is contributed by Tyr-18. The active-site Proton donor is the His-22. Residues Tyr-41 and 76-77 each bind substrate; that span reads WW.

Belongs to the rhamnose mutarotase family. Homodimer.

Its subcellular location is the cytoplasm. It catalyses the reaction alpha-L-rhamnose = beta-L-rhamnose. Its pathway is carbohydrate metabolism; L-rhamnose metabolism. In terms of biological role, involved in the anomeric conversion of L-rhamnose. In Escherichia fergusonii (strain ATCC 35469 / DSM 13698 / CCUG 18766 / IAM 14443 / JCM 21226 / LMG 7866 / NBRC 102419 / NCTC 12128 / CDC 0568-73), this protein is L-rhamnose mutarotase.